The chain runs to 359 residues: Phospho-N-acetylmuramoyl-pentapeptide-transferase (359 aa).

Helical transmembrane passes span 3–23 (QILI…PVLI), 55–75 (VAIL…GLAF), 80–100 (IGAS…VGFI), 117–137 (TAKT…VLQF), 156–176 (IATV…IVSA), 187–207 (LDGL…LITF), 231–251 (LALI…WNAA), 255–275 (IFMG…LSVT), 280–300 (ILAV…VLQI), and 334–354 (FWLL…GEWL).

It belongs to the glycosyltransferase 4 family. MraY subfamily. Mg(2+) is required as a cofactor.

The protein localises to the cell membrane. The enzyme catalyses UDP-N-acetyl-alpha-D-muramoyl-L-alanyl-gamma-D-glutamyl-meso-2,6-diaminopimeloyl-D-alanyl-D-alanine + di-trans,octa-cis-undecaprenyl phosphate = di-trans,octa-cis-undecaprenyl diphospho-N-acetyl-alpha-D-muramoyl-L-alanyl-D-glutamyl-meso-2,6-diaminopimeloyl-D-alanyl-D-alanine + UMP. The protein operates within cell wall biogenesis; peptidoglycan biosynthesis. Functionally, catalyzes the initial step of the lipid cycle reactions in the biosynthesis of the cell wall peptidoglycan: transfers peptidoglycan precursor phospho-MurNAc-pentapeptide from UDP-MurNAc-pentapeptide onto the lipid carrier undecaprenyl phosphate, yielding undecaprenyl-pyrophosphoryl-MurNAc-pentapeptide, known as lipid I. The chain is Phospho-N-acetylmuramoyl-pentapeptide-transferase from Mycobacterium tuberculosis (strain ATCC 25177 / H37Ra).